Here is a 272-residue protein sequence, read N- to C-terminus: MKNTGKRIDLIANRKPQSQRVLYELRDRLKRNQFILNDTNPDIVISIGGDGMLLSAFHKYENQLEKVRFIGLHTGHLGFYTDYRDFELDKLVTNLQLDTGARVSYPVLNVKVFLENGEVKIFRALNEASIRRSDRTMVADIVINGVPFERFRGDGLTVSTPTGSTAYNKSLGGAVLHPTIEALQLTEIASLNNRVYRTLGSSIIVPKKDKIELIPTRNDYHTISVDNSVYSFRNIERIEYQIAHHKIHFVATPSHTSFWNRVKDAFIGEVDE.

Asp-50 (proton acceptor) is an active-site residue. NAD(+)-binding positions include 50-51 (DG), 126-127 (NE), Arg-152, Asp-154, 165-170 (TAYNKS), and Ala-189.

It belongs to the NAD kinase family. Requires a divalent metal cation as cofactor.

The protein localises to the cytoplasm. It carries out the reaction NAD(+) + ATP = ADP + NADP(+) + H(+). In terms of biological role, involved in the regulation of the intracellular balance of NAD and NADP, and is a key enzyme in the biosynthesis of NADP. Catalyzes specifically the phosphorylation on 2'-hydroxyl of the adenosine moiety of NAD to yield NADP. The sequence is that of NAD kinase from Streptococcus pneumoniae (strain Hungary19A-6).